The chain runs to 567 residues: Urease subunit alpha (567 aa).

Residues H134, H136, and K217 each coordinate Ni(2+). K217 is subject to N6-carboxylysine. Residue H219 coordinates substrate. Residues H246 and H272 each contribute to the Ni(2+) site. Catalysis depends on H320, which acts as the Proton donor. D360 contributes to the Ni(2+) binding site.

Belongs to the metallo-dependent hydrolases superfamily. Urease alpha subunit family. Heterotrimer of UreA (gamma), UreB (beta) and UreC (alpha) subunits. Three heterotrimers associate to form the active enzyme. The cofactor is Ni cation. Carboxylation allows a single lysine to coordinate two nickel ions.

Its subcellular location is the cytoplasm. The catalysed reaction is urea + 2 H2O + H(+) = hydrogencarbonate + 2 NH4(+). The protein operates within nitrogen metabolism; urea degradation; CO(2) and NH(3) from urea (urease route): step 1/1. This Polynucleobacter asymbioticus (strain DSM 18221 / CIP 109841 / QLW-P1DMWA-1) (Polynucleobacter necessarius subsp. asymbioticus) protein is Urease subunit alpha.